The primary structure comprises 478 residues: Methionine aminopeptidase 2 (478 aa).

The interval 1 to 122 (MAGVEQAASF…TDPPSVPICD (122 aa)) is disordered. A2 is subject to N-acetylalanine. The segment covering 36–46 (KKKRRKKKKGK) has biased composition (basic residues). Position 60 is a phosphoserine; alternate (S60). The O-linked (GlcNAc) serine; alternate glycan is linked to S60. Acidic residues predominate over residues 80–92 (ERDDDDEDGDGDA). The segment covering 97–109 (GKKKKKKKKKRGP) has biased composition (basic residues). H231 is a substrate binding site. A divalent metal cation contacts are provided by D251, D262, and H331. H339 lines the substrate pocket. Residues E364 and E459 each contribute to the a divalent metal cation site.

Belongs to the peptidase M24A family. Methionine aminopeptidase eukaryotic type 2 subfamily. Binds EIF2S1 at low magnesium concentrations. Interacts strongly with the eIF-2 gamma-subunit EIF2S3. Co(2+) serves as cofactor. It depends on Zn(2+) as a cofactor. The cofactor is Mn(2+). Requires Fe(2+) as cofactor. Post-translationally, contains approximately 12 O-linked N-acetylglucosamine (GlcNAc) residues. O-glycosylation is required for EIF2S1 binding.

Its subcellular location is the cytoplasm. The enzyme catalyses Release of N-terminal amino acids, preferentially methionine, from peptides and arylamides.. Its function is as follows. Cotranslationally removes the N-terminal methionine from nascent proteins. The N-terminal methionine is often cleaved when the second residue in the primary sequence is small and uncharged (Met-Ala-, Cys, Gly, Pro, Ser, Thr, or Val). Protects eukaryotic initiation factor EIF2S1 from translation-inhibiting phosphorylation by inhibitory kinases such as EIF2AK2/PKR and EIF2AK1/HCR. Plays a critical role in the regulation of protein synthesis. The sequence is that of Methionine aminopeptidase 2 (Metap2) from Mus musculus (Mouse).